The sequence spans 215 residues: UPF0056 membrane protein BU267 (215 aa).

The next 6 membrane-spanning stretches (helical) occupy residues 14–34 (FFIGLCALVNPIGMIPIFTTM), 56–76 (LILLISLFFGSNILNIFGISI), 81–101 (IAGGILIISIAFSMISGQFIK), 120–140 (VVPLAMPLIAGPGAISSTIVW), 150–170 (LFLCSLVIFLFSFVCWLCFEA), and 189–209 (IMGLLLMSLGIEFISTGIGAI).

It belongs to the UPF0056 (MarC) family.

The protein resides in the cell membrane. This is UPF0056 membrane protein BU267 from Buchnera aphidicola subsp. Acyrthosiphon pisum (strain APS) (Acyrthosiphon pisum symbiotic bacterium).